The following is a 280-amino-acid chain: Four and a half LIM domains protein 3 (280 aa).

An N-acetylserine modification is found at Ser-2. The C4-type zinc finger occupies 7-31; that stretch reads CAKCNESLYGRKYIQTDSGPYCVPC. LIM zinc-binding domains lie at 40–92 and 101–153; these read CAEC…CNDC and CSAC…CVPC. The residue at position 157 (Lys-157) is an N6-acetyllysine. LIM zinc-binding domains are found at residues 162–212 and 221–275; these read CARC…CVAC and CSSC…CQGC. At Lys-235 the chain carries N6-acetyllysine.

As to quaternary structure, interacts with SOX15; the interaction recruits FHL3 to FOXK1 promoters where it acts as a transcriptional coactivator of FOXK1. As to expression, expressed only in skeletal muscle.

It is found in the nucleus. The protein localises to the cytoplasm. In terms of biological role, recruited by SOX15 to FOXK1 promoters where it acts as a transcriptional coactivator of FOXK1. The protein is Four and a half LIM domains protein 3 (FHL3) of Homo sapiens (Human).